Consider the following 247-residue polypeptide: PF03932 family protein CutC (247 aa).

A compositionally biased stretch (polar residues) spans 205 to 222 (KSTRPSLMESNSSAQMGS). The interval 205 to 226 (KSTRPSLMESNSSAQMGSNDVD) is disordered.

Belongs to the CutC family.

It localises to the cytoplasm. The protein is PF03932 family protein CutC of Vibrio atlanticus (strain LGP32) (Vibrio splendidus (strain Mel32)).